A 319-amino-acid polypeptide reads, in one-letter code: Cobalamin biosynthesis protein CbiB (319 aa).

The next 5 membrane-spanning stretches (helical) occupy residues 56 to 76, 82 to 102, 153 to 173, 204 to 224, and 296 to 316; these read VMWV…LALA, WFGW…RSLA, VDGI…LAMA, VANY…AGLC, and LMWV…CGLS.

Belongs to the CobD/CbiB family.

The protein localises to the cell membrane. It participates in cofactor biosynthesis; adenosylcobalamin biosynthesis. In terms of biological role, converts cobyric acid to cobinamide by the addition of aminopropanol on the F carboxylic group. However, the true cosubstrate could be (R)-1-amino-2-propanol O-2-phosphate, leading to cobinamide phosphate. The protein is Cobalamin biosynthesis protein CbiB of Salmonella paratyphi B (strain ATCC BAA-1250 / SPB7).